The chain runs to 196 residues: Peroxynitrite isomerase (196 aa).

Residues 1 to 29 (MSDENPLQPPWLNAPPVDPYPYEESHDLR) form a disordered region. Residues 7-19 (LQPPWLNAPPVDP) show a composition bias toward pro residues. The short motif at 46 to 52 (GVWRGRG) is the GXWXGXG element. Residue His186 coordinates heme b.

This sequence belongs to the nitrobindin family. Homodimer. Heme b serves as cofactor.

It catalyses the reaction peroxynitrite = nitrate. It functions in the pathway nitrogen metabolism. Functionally, heme-binding protein able to scavenge peroxynitrite and to protect free L-tyrosine against peroxynitrite-mediated nitration, by acting as a peroxynitrite isomerase that converts peroxynitrite to nitrate. Therefore, this protein likely plays a role in peroxynitrite sensing and in the detoxification of reactive nitrogen and oxygen species (RNS and ROS, respectively). Is able to bind nitric oxide (NO) in vitro, but may act as a sensor of peroxynitrite levels in vivo. In Salinispora arenicola (strain CNS-205), this protein is Peroxynitrite isomerase.